The following is a 620-amino-acid chain: Dihydroxy-acid dehydratase (620 aa).

Asp-82 serves as a coordination point for Mg(2+). Cys-123 contributes to the [2Fe-2S] cluster binding site. Mg(2+) is bound by residues Asp-124 and Lys-125. Lys-125 is modified (N6-carboxylysine). Position 197 (Cys-197) interacts with [2Fe-2S] cluster. Glu-493 contacts Mg(2+). The Proton acceptor role is filled by Ser-519.

The protein belongs to the IlvD/Edd family. As to quaternary structure, homodimer. Requires [2Fe-2S] cluster as cofactor. It depends on Mg(2+) as a cofactor.

The enzyme catalyses (2R)-2,3-dihydroxy-3-methylbutanoate = 3-methyl-2-oxobutanoate + H2O. It catalyses the reaction (2R,3R)-2,3-dihydroxy-3-methylpentanoate = (S)-3-methyl-2-oxopentanoate + H2O. Its pathway is amino-acid biosynthesis; L-isoleucine biosynthesis; L-isoleucine from 2-oxobutanoate: step 3/4. The protein operates within amino-acid biosynthesis; L-valine biosynthesis; L-valine from pyruvate: step 3/4. Functions in the biosynthesis of branched-chain amino acids. Catalyzes the dehydration of (2R,3R)-2,3-dihydroxy-3-methylpentanoate (2,3-dihydroxy-3-methylvalerate) into 2-oxo-3-methylpentanoate (2-oxo-3-methylvalerate) and of (2R)-2,3-dihydroxy-3-methylbutanoate (2,3-dihydroxyisovalerate) into 2-oxo-3-methylbutanoate (2-oxoisovalerate), the penultimate precursor to L-isoleucine and L-valine, respectively. The polypeptide is Dihydroxy-acid dehydratase (Bifidobacterium longum (strain NCC 2705)).